The chain runs to 1242 residues: Reverse gyrase 1 (1242 aa).

The segment at 6–46 adopts an RG N-terminal-type zinc-finger fold; the sequence is KVPPSIYTRSCPNCGGNISSQRLFNGSVCESCLKDDREFSN. Residues cysteine 16, cysteine 19, cysteine 34, and cysteine 37 each contribute to the Zn(2+) site. ATP contacts are provided by residues glutamine 93 and 110-117; that span reads APPGLGKT. Residues 97 to 298 form the Helicase ATP-binding domain; sequence TIRFLRGESF…SLMGFRPGSS (202 aa). Positions 214-217 match the DEAD box motif; it reads DDVD. The tract at residues 615–1242 is topoisomerase I; sequence LSVKTTLFIV…ELYNEIQTIS (628 aa). The region spanning 619–785 is the Toprim domain; that stretch reads TTLFIVESPN…NIKRAEFHEV (167 aa). Residue glutamate 625 coordinates Mg(2+). The RG C-terminal-type; atypical zinc-finger motif lies at 703–731; that stretch reads IKKCEKGHQIVKDLSQNKCPICGSRIVTD. The Zn(2+) site is built by cysteine 706, histidine 710, cysteine 721, and cysteine 724. Mg(2+) is bound at residue aspartate 754. The Topo IA-type catalytic domain maps to 801-1242; it reads NDNLVKSQIV…ELYNEIQTIS (442 aa). The active-site O-(5'-phospho-DNA)-tyrosine intermediate is the tyrosine 965.

It in the N-terminal section; belongs to the DEAD box helicase family. DDVD subfamily. The protein in the C-terminal section; belongs to the type IA topoisomerase family. Monomer. The cofactor is Zn(2+). Requires Mg(2+) as cofactor.

The protein resides in the cytoplasm. The enzyme catalyses ATP + H2O = ADP + phosphate + H(+). With respect to regulation, at least one of the two reverse gyrase proteins is inhibited by actinomycin D. Highly sensitive to NaCl concentrations, maximal positive supercoiling is observed with 10 mM NaCl; as NaCl rises, supercoiling decreases. At 300 mM NaCl relaxes but does not introduce positive supercoils into negatively supercoiled substrate, at 400 mM NaCl does not relax DNA. In terms of biological role, modifies the topological state of DNA by introducing positive supercoils in an ATP-dependent process. Increases the linking number in steps of +1. Involved in homeostatic control of DNA topology in balance with type II topoisomerase 6 (TopoVI); levels of TopoVI are constant at 80 and 88 degrees Celsius and TopoVI is probably less active at 88 degrees (characterized enzyme is from S.shibatae B12), so reverse gyrase mediates most of the fine-tuning of DNA topology. Changes the DNA linking number step-by-step in a distributive manner. At low protein to DNA ratios mostly relaxes negatively supercoiled substrate, as ratios rise more positive supercoils are introduced. At 90 degrees Celsius introduces 19 positive supercoils into pTZ18R DNA (probably 2860 bp), less than TopR2. Relaxes negatively supercoiled DNA in the absence of ATP. It cleaves transiently a single DNA strand and remains covalently bound to the 5' DNA end through a tyrosine residue. May be involved in DNA damage response. Its activity is inhibited by the DNA-binding protein 7d (Sso7d), suggesting that the Sso7d activity might counteract the overwinding effect of reverse gyrase. Functionally, resolves 4-way Holliday junctions (HJ) with 20 bases in each arm in vitro, distorting the junction. Very high protein levels are required, but total enzyme content of the cell (there are 2 reverse gyrases in this organism) is estimated to be 20-200 molecules/cell. HJ resolution does not require either ATPase activity or the active tyrosine. The individual domains do not resolve HJs but do so when mixed. Also unwinds a fork substrate. There are 2 genes for this protein in the cell. During exponential growth this is the less expressed isoform (about 52 molecules per cell at 80 degrees Celsius, about 28 molecules at 88 degrees Celsius); this isoform is more active at higher temperature. Grows actively at both 80 and 88 degrees Celsius; survives a long exposure at 45 degrees Celsius without DNA replication or cell division occurring. Experiments using whole cell extracts do not distinguish which isoform is present, the results are probably a mixture of the two forms. In Saccharolobus solfataricus (strain ATCC 35092 / DSM 1617 / JCM 11322 / P2) (Sulfolobus solfataricus), this protein is Reverse gyrase 1.